The primary structure comprises 218 residues: Small ribosomal subunit protein uS3 (218 aa).

The KH type-2 domain maps to 38–106 (IREFISKRLS…RVHINILEIK (69 aa)).

The protein belongs to the universal ribosomal protein uS3 family. In terms of assembly, part of the 30S ribosomal subunit. Forms a tight complex with proteins S10 and S14.

Binds the lower part of the 30S subunit head. Binds mRNA in the 70S ribosome, positioning it for translation. The polypeptide is Small ribosomal subunit protein uS3 (Bacillus pumilus (strain SAFR-032)).